Here is a 601-residue protein sequence, read N- to C-terminus: uncharacterized protein (601 aa).

3 helical membrane-spanning segments follow: residues 74–94 (IFFF…VFSI), 104–124 (VSFL…PNDG), and 531–551 (LVLL…NYYY).

The protein localises to the endoplasmic reticulum membrane. This is an uncharacterized protein from Schizosaccharomyces pombe (strain 972 / ATCC 24843) (Fission yeast).